The following is a 138-amino-acid chain: MLIPRKVKHRKQHHPRQRGIASGGTTVNFGDYGIQALEHAYVTNRQIESARIAINRHIKRGGKVWINIFPDRPLTKKPAETRMGSGKGSPEWWVANVKPGRVLFELSYPNEGVARAALTRAIHKLPIKARIITREEQF.

Residues 1–17 are compositionally biased toward basic residues; that stretch reads MLIPRKVKHRKQHHPRQ. The disordered stretch occupies residues 1–22; the sequence is MLIPRKVKHRKQHHPRQRGIAS.

The protein belongs to the universal ribosomal protein uL16 family. As to quaternary structure, part of the 50S ribosomal subunit.

Functionally, binds 23S rRNA and is also seen to make contacts with the A and possibly P site tRNAs. The protein is Large ribosomal subunit protein uL16 of Mycobacterium tuberculosis (strain ATCC 25177 / H37Ra).